The chain runs to 353 residues: ATPase GET3A (353 aa).

27–34 serves as a coordination point for ATP; sequence KGGVGKTT. Residue Asp-56 is part of the active site. Residues Glu-226 and Asn-253 each contribute to the ATP site. Positions 320 to 353 form a coiled coil; sequence TTSRSNVEELERKVHTLRLQLKTAEEELERVKSG.

The protein belongs to the arsA ATPase family. In terms of assembly, homodimer. Interacts with GET1 and GET4.

The protein resides in the cytoplasm. Its subcellular location is the cytosol. It localises to the endoplasmic reticulum. It carries out the reaction ATP + H2O = ADP + phosphate + H(+). ATPase required for the post-translational delivery of tail-anchored (TA) proteins to the endoplasmic reticulum. Recognizes and selectively binds the transmembrane domain of TA proteins in the cytosol. This complex then targets to the endoplasmic reticulum by membrane-bound receptors, where the tail-anchored protein is released for insertion. This process is regulated by ATP binding and hydrolysis. ATP binding drives the homodimer towards the closed dimer state, facilitating recognition of newly synthesized TA membrane proteins. ATP hydrolysis is required for insertion. Subsequently, the homodimer reverts towards the open dimer state, lowering its affinity for the membrane-bound receptor, and returning it to the cytosol to initiate a new round of targeting. Involved in the control of root hair growth through the regulation of syntaxin SYP123 expression. This is ATPase GET3A from Arabidopsis thaliana (Mouse-ear cress).